The chain runs to 136 residues: Interleukin-13 (136 aa).

The signal sequence occupies residues 1 to 18 (MALWLTVVIAFTCIGGLA). Residues Asn-38, Asn-49, Asn-57, Asn-72, Asn-75, and Asn-131 are each glycosylated (N-linked (GlcNAc...) asparagine). Disulfide bonds link Cys-48-Cys-76 and Cys-64-Cys-90.

This sequence belongs to the IL-4/IL-13 family. In terms of assembly, interacts with IL13RA2.

Its subcellular location is the secreted. Cytokine that plays important roles in allergic inflammation and immune response to parasite infection. Synergizes with IL2 in regulating interferon-gamma synthesis. Stimulates B-cell proliferation, and activation of eosinophils, basophils, and mast cells. Plays an important role in controlling IL33 activity by modulating the production of transmembrane and soluble forms of interleukin-1 receptor-like 1/IL1RL1. Displays the capacity to antagonize Th1-driven proinflammatory immune response and downregulates synthesis of many proinflammatory cytokines including IL1, IL6, IL10, IL12 and TNF-alpha through a mechanism that partially involves suppression of NF-kappa-B. Also functions on nonhematopoietic cells, including endothelial cells where it induces vascular cell adhesion protein 1/VCAM1, which is important in the recruitment of eosinophils. Exerts its biological effects through its receptors which comprises the IL4R chain and the IL13RA1 chain, to activate JAK1 and TYK2, leading to the activation of STAT6. Aside from IL13RA1, another receptor IL13RA2 acts as a high affinity decoy for IL13 and mediates internalization and depletion of extracellular IL13. This Camelus bactrianus (Bactrian camel) protein is Interleukin-13 (IL13).